The sequence spans 252 residues: ATP synthase subunit a (252 aa).

The next 6 membrane-spanning stretches (helical) occupy residues 29 to 49 (FTNV…FLFI), 87 to 107 (FFPL…IGLF), 116 to 136 (QIMI…GYGF), 146 to 166 (LFVP…IEVI), 183 to 205 (MLAG…ELGI), and 219 to 239 (VAIT…FTVL).

The protein belongs to the ATPase A chain family. In terms of assembly, F-type ATPases have 2 components, CF(1) - the catalytic core - and CF(0) - the membrane proton channel. CF(1) has five subunits: alpha(3), beta(3), gamma(1), delta(1), epsilon(1). CF(0) has three main subunits: a(1), b(2) and c(9-12). The alpha and beta chains form an alternating ring which encloses part of the gamma chain. CF(1) is attached to CF(0) by a central stalk formed by the gamma and epsilon chains, while a peripheral stalk is formed by the delta and b chains.

It is found in the cell inner membrane. In terms of biological role, key component of the proton channel; it plays a direct role in the translocation of protons across the membrane. This is ATP synthase subunit a from Bartonella quintana (strain Toulouse) (Rochalimaea quintana).